The following is a 401-amino-acid chain: S-adenosylmethionine synthase (401 aa).

Glycine 135–aspartate 140 provides a ligand contact to ATP.

This sequence belongs to the AdoMet synthase 2 family. Requires Mg(2+) as cofactor.

The enzyme catalyses L-methionine + ATP + H2O = S-adenosyl-L-methionine + phosphate + diphosphate. The protein operates within amino-acid biosynthesis; S-adenosyl-L-methionine biosynthesis; S-adenosyl-L-methionine from L-methionine: step 1/1. Functionally, catalyzes the formation of S-adenosylmethionine from methionine and ATP. This Methanothermobacter thermautotrophicus (strain ATCC 29096 / DSM 1053 / JCM 10044 / NBRC 100330 / Delta H) (Methanobacterium thermoautotrophicum) protein is S-adenosylmethionine synthase (mat).